The primary structure comprises 424 residues: 3-oxo-tetronate kinase (424 aa).

Residues serine 264, 363 to 366 (GGET), and glycine 408 each bind ATP.

Belongs to the four-carbon acid sugar kinase family.

It carries out the reaction 3-dehydro-L-erythronate + ATP = 3-dehydro-4-O-phospho-L-erythronate + ADP + H(+). The enzyme catalyses 3-dehydro-D-erythronate + ATP = 3-dehydro-4-O-phospho-D-erythronate + ADP + H(+). In terms of biological role, catalyzes the ATP-dependent phosphorylation of 3-oxo-tetronate to 3-oxo-tetronate 4-phosphate. In Methylobacterium radiotolerans (strain ATCC 27329 / DSM 1819 / JCM 2831 / NBRC 15690 / NCIMB 10815 / 0-1), this protein is 3-oxo-tetronate kinase.